A 519-amino-acid chain; its full sequence is NAD-dependent histone deacetylase SIR2 (519 aa).

The interval 154–212 (EIDENDNKNDGTNNSDIDSDIDSNSDMDSQSESGELDDAMDVDDSLSENEDEYDQDMST) is disordered. The segment covering 187 to 208 (GELDDAMDVDDSLSENEDEYDQ) has biased composition (acidic residues). A Deacetylase sirtuin-type domain is found at 221-486 (MTPFKYKLPD…SYLCKCLKWD (266 aa)). Residues 246–265 (GAGI…KGLY) and 328–331 (QNID) contribute to the NAD(+) site. His348 acts as the Proton acceptor in catalysis. Residues Cys356, Cys359, Cys380, and Cys383 each contribute to the Zn(2+) site. NAD(+) contacts are provided by residues 430 to 432 (GTS), 455 to 457 (NKD), and Cys472.

This sequence belongs to the sirtuin family. Class I subfamily. Interacts with HXK1. Requires Zn(2+) as cofactor.

The protein resides in the nucleus. It carries out the reaction N(6)-acetyl-L-lysyl-[protein] + NAD(+) + H2O = 2''-O-acetyl-ADP-D-ribose + nicotinamide + L-lysyl-[protein]. NAD-dependent deacetylase. Heterochromatin component that silences transcription at silent mating loci, telomeres and the ribosomal DNA, and that also suppresses recombination in the rDNA and extends replicative life span. It acts as a NAD-dependent histone deacetylase, which deacetylates 'Lys-9' and 'Lys-14' of Histone H3 and 'Lys-16' of Histone H4. Functions in the distribution of oxidatively damaged proteins during cell division. Mediates phenotypic switching. The protein is NAD-dependent histone deacetylase SIR2 of Candida albicans (strain SC5314 / ATCC MYA-2876) (Yeast).